Here is a 1341-residue protein sequence, read N- to C-terminus: Subtilisin-like protease 2 (1341 aa).

A signal peptide spans 1–18 (MLNIIYVVSLILIKFIFY). Residues 19-686 (KECNNNNNYY…KLYNNKYSFL (668 aa)) constitute a propeptide, inhibition peptide. 2 disordered regions span residues 85-107 (EKKT…EKKK) and 143-171 (ADVS…NYKN). 5 N-linked (GlcNAc...) asparagine glycosylation sites follow: Asn165, Asn343, Asn449, Asn453, and Asn492. The tract at residues 415-474 (KKSKKEKENTQQKGGNNPNVDINILNNNNNNNNNNNSNNNSNSMNDEEINYNNNNNNKES) is disordered. Over residues 430–474 (NNPNVDINILNNNNNNNNNNNSNNNSNSMNDEEINYNNNNNNKES) the composition is skewed to low complexity. A disordered region spans residues 499–530 (IYHNKNDNSYKNKKEGTGKNNDNNDPNNNNNK). A compositionally biased stretch (basic and acidic residues) spans 502-515 (NKNDNSYKNKKEGT). Residues 517 to 530 (KNNDNNDPNNNNNK) are compositionally biased toward low complexity. Residues Asn550, Asn641, and Asn728 are each glycosylated (N-linked (GlcNAc...) asparagine). Residues 687–1136 (NKFLNIEPLI…LYNLYEYDSH (450 aa)) are Extracellular-facing. Residues 726–1019 (TWNLSIIRVF…DSLVNAEGAV (294 aa)) form the Peptidase S8 domain. Catalysis depends on charge relay system residues Asp754 and His797. N-linked (GlcNAc...) asparagine glycosylation is found at Asn820, Asn856, Asn892, and Asn950. The active-site Charge relay system is Ser960. Residues Asn1009 and Asn1105 are each glycosylated (N-linked (GlcNAc...) asparagine). A helical membrane pass occupies residues 1137 to 1157 (YLLASVILFFLALLSIFVGMI). At 1158 to 1341 (YMKSRKHSDK…MNQLDDMFMK (184 aa)) the chain is on the cytoplasmic side.

This sequence belongs to the peptidase S8 family. Post-translationally, proteolytically cleaved at the N-terminus to generate a 74kDa intermediate which is further processed into a 72kDa form. The first maturation cleavage is autocatalytic, occurs in the ER and is necessary for the subsequent SUB2 trafficking to the microneme. The second cleavage may be mediated by PMX/plasmepsin X.

It is found in the cell membrane. The protein localises to the cytoplasmic vesicle. It localises to the secretory vesicle. Its subcellular location is the microneme membrane. It catalyses the reaction Hydrolysis of proteins with broad specificity for peptide bonds, and a preference for a large uncharged residue in P1. Hydrolyzes peptide amides.. Its activity is regulated as follows. Activation may be calcium-dependent. Inhibited by the non-covalent interaction with the cleaved propeptide. In terms of biological role, serine protease which plays an essential role in the shedding of AMA1, MSP1 and MSP7 from the surface of the invading merozoite; this step is essential for productive invasion and the release of the adhesion between the erythrocyte and the merozoite. May cleave TRAMP/PTTRAMP, thereby shedding TRAMP from the merozoite surface during erythrocyte invasion. The protein is Subtilisin-like protease 2 of Plasmodium falciparum (isolate 3D7).